The chain runs to 414 residues: CinA-like protein (414 aa).

It belongs to the CinA family.

This chain is CinA-like protein, found in Koribacter versatilis (strain Ellin345).